Here is a 46-residue protein sequence, read N- to C-terminus: Light-harvesting protein B-800/850 beta 1 chain (46 aa).

Topologically, residues 2–19 (AERSLSGLTEEEAIAVHD) are cytoplasmic. A bacteriochlorophyll is bound by residues histidine 18 and histidine 36. A helical membrane pass occupies residues 20–42 (QFKTTFSAFIILAAVAHVLVWVW). The Periplasmic portion of the chain corresponds to 43–46 (KPWF).

It belongs to the antenna complex beta subunit family. As to quaternary structure, the core complex is formed by different alpha and beta chains, binding bacteriochlorophyll molecules, and arranged most probably in tetrameric structures disposed around the reaction center.

The protein resides in the cell inner membrane. In terms of biological role, antenna complexes are light-harvesting systems, which transfer the excitation energy to the reaction centers. The sequence is that of Light-harvesting protein B-800/850 beta 1 chain (B1) from Magnetospirillum molischianum (Rhodospirillum molischianum).